Consider the following 437-residue polypeptide: Elongation factor 1-gamma (437 aa).

Ala-2 carries the N-acetylalanine modification. The 86-residue stretch at 2–87 folds into the GST N-terminal domain; it reads AAGTLYTYPE…YVSNEELRGS (86 aa). Positions 88-216 constitute a GST C-terminal domain; it reads TPEAAAQVVQ…VKLCEKMAQF (129 aa). An N6-acetyllysine mark is found at Lys-147 and Lys-212. Basic and acidic residues predominate over residues 221-254; it reads FAESQPKKDTPRKEKGSREEKQKPQTERKEEKKA. The disordered stretch occupies residues 221–268; the sequence is FAESQPKKDTPRKEKGSREEKQKPQTERKEEKKAAAPAPEEEMDECEQ. Residue Lys-253 forms a Glycyl lysine isopeptide (Lys-Gly) (interchain with G-Cter in SUMO1) linkage. Residues 276-437 form the EF-1-gamma C-terminal domain; sequence AKDPFAHLPK…KAVNQGKIFK (162 aa). Lys-285 is covalently cross-linked (Glycyl lysine isopeptide (Lys-Gly) (interchain with G-Cter in SUMO2)). Residue Lys-401 is modified to N6-acetyllysine. Residue Lys-434 is modified to N6-acetyllysine; alternate. The residue at position 434 (Lys-434) is an N6-malonyllysine; alternate.

As to quaternary structure, EF-1 is composed of four subunits: alpha, beta, delta, and gamma.

Functionally, probably plays a role in anchoring the complex to other cellular components. The sequence is that of Elongation factor 1-gamma (Eef1g) from Rattus norvegicus (Rat).